The primary structure comprises 206 residues: Phosphoribosyl-dephospho-CoA transferase (206 aa).

Active-site residues include D131 and D133.

This sequence belongs to the MdcG family.

The catalysed reaction is apo-[malonate decarboxylase ACP] + 2'-(5''-triphospho-alpha-D-ribosyl)-3'-dephospho-CoA = holo-[malonate decarboxylase ACP] + diphosphate. Its function is as follows. Transfers 2'-(5-triphosphoribosyl)-3'-dephosphocoenzyme-A to the apo-[acyl-carrier-protein] of the malonate decarboxylase to yield holo-[acyl-carrier-protein]. The polypeptide is Phosphoribosyl-dephospho-CoA transferase (Pseudomonas fluorescens (strain Pf0-1)).